The sequence spans 158 residues: Rhombotin-2 (158 aa).

LIM zinc-binding domains are found at residues 30 to 89 (CGGC…RLFG) and 94 to 153 (CASC…EWTK).

Interacts with BEX2 and KDM5A. Interacts via its LIM domains with ELF2 and LDB1. Also interacts with basic helix-loop-helix protein TAL1/SCL and can assemble in a complex with LMO2 and TAL1/SCL. As to expression, expressed in early mouse development in central nervous system, lung, kidney, liver and spleen but only very low levels occur in thymus.

It is found in the nucleus. Functionally, acts with TAL1/SCL to regulate red blood cell development. Also acts with LDB1 to maintain erythroid precursors in an immature state. The protein is Rhombotin-2 (Lmo2) of Mus musculus (Mouse).